We begin with the raw amino-acid sequence, 116 residues long: M-zodatoxin-Lt6a/c (116 aa).

The first 22 residues, 1–22 (MKYFVVALTLAVAFVCIEECKT), serve as a signal peptide directing secretion. 2 propeptides span residues 23 to 44 (VEIG…DEAR) and 80 to 83 (EEAR). 2 consecutive short sequence motifs (processing quadruplet motif) follow at residues 41-44 (DEAR) and 80-83 (EEAR). Glutamine 84 carries the post-translational modification Pyrrolidone carboxylic acid.

The protein belongs to the cationic peptide 03 (latarcin) family. 06 subfamily. Post-translationally, cleavage of the propeptide depends on the processing quadruplet motif (XXXR, with at least one of X being E). In terms of tissue distribution, expressed by the venom gland.

It is found in the secreted. Its function is as follows. Does not have antimicrobial activity against Gram-positive bacteria (A.globiformis VKM Ac-1112 (MIC&gt;70 uM) and B.subtilis VKM B-501 (MIC&gt;70 uM)), Gram-negative bacteria (E.coli DH5-alpha (MIC&gt;70 uM), E.coli MH1 (MIC&gt;70 uM) and P.aeruginosa PAO1 (MIC&gt;70 uM)), yeast (P.pastoris GS115 (MIC&gt;70 uM) or S.cerevisiae Y190 (MIC&gt;70 uM)). Does not have hemolytic activity against rabbit erythrocytes. However, it causes some conductance changes in planar bilayer membranes, without membrane rupture, suggesting a cytolytic function on other biological targets. It causes paralysis, but is not lethal when injected into insect larvae. The chain is M-zodatoxin-Lt6a/c from Lachesana tarabaevi (Spider).